Reading from the N-terminus, the 506-residue chain is Deoxyguanosinetriphosphate triphosphohydrolase (506 aa).

Residues 66–274 (RLTHSLEVQQ…MEAADDISYC (209 aa)) enclose the HD domain.

It belongs to the dGTPase family. Type 1 subfamily. As to quaternary structure, homotetramer. It depends on Mg(2+) as a cofactor.

It carries out the reaction dGTP + H2O = 2'-deoxyguanosine + triphosphate + H(+). In terms of biological role, dGTPase preferentially hydrolyzes dGTP over the other canonical NTPs. This chain is Deoxyguanosinetriphosphate triphosphohydrolase, found in Yersinia pestis bv. Antiqua (strain Antiqua).